Reading from the N-terminus, the 309-residue chain is MTNSLYKKHIISIPELSRAELELIVKTAGQLKAEPNPELIKNKVVASCFFEPSTRTRLSFETAIQRIGGDVIGFDDGGNTSLAKKGETLSDSVQVISNYVDAFVMRHPQEGAARLASEFSNGVPVINAGDGANQHPTQTLLDLFTISETQGRLDNLNVAFVGDLKYGRTVHSLTQALAKFNNIRFFFVAPDALAMPDYILEDLDEAGISYSLHTDMETVIPELDILYMTRVQKERFDESEYAHIKSAYILTAALLEGARENLKVLHPLPRVDEITTDVDKTPHAYYFQQAGNGVYAREALLALVLNESL.

R55 and T56 together coordinate carbamoyl phosphate. K85 is a binding site for L-aspartate. R106, H135, and Q138 together coordinate carbamoyl phosphate. Positions 168 and 230 each coordinate L-aspartate. Carbamoyl phosphate contacts are provided by L268 and P269.

Belongs to the aspartate/ornithine carbamoyltransferase superfamily. ATCase family. In terms of assembly, heterododecamer (2C3:3R2) of six catalytic PyrB chains organized as two trimers (C3), and six regulatory PyrI chains organized as three dimers (R2).

It catalyses the reaction carbamoyl phosphate + L-aspartate = N-carbamoyl-L-aspartate + phosphate + H(+). It participates in pyrimidine metabolism; UMP biosynthesis via de novo pathway; (S)-dihydroorotate from bicarbonate: step 2/3. Catalyzes the condensation of carbamoyl phosphate and aspartate to form carbamoyl aspartate and inorganic phosphate, the committed step in the de novo pyrimidine nucleotide biosynthesis pathway. In Vibrio vulnificus (strain CMCP6), this protein is Aspartate carbamoyltransferase catalytic subunit.